A 778-amino-acid chain; its full sequence is Putative ATP-dependent RNA helicase MJ1505 (778 aa).

The Helicase ATP-binding domain maps to 22–186; the sequence is IAANALKKKT…EICENLGIEH (165 aa). ATP is bound at residue 35 to 42; sequence LSTGLGKT. The DEAH box motif lies at 137–140; that stretch reads DEAH. Residues 338 to 516 enclose the Helicase C-terminal domain; sequence KVVDMVKNIL…EIKEETEEIK (179 aa).

The protein belongs to the DEAD box helicase family. DEAH subfamily.

The enzyme catalyses ATP + H2O = ADP + phosphate + H(+). The polypeptide is Putative ATP-dependent RNA helicase MJ1505 (Methanocaldococcus jannaschii (strain ATCC 43067 / DSM 2661 / JAL-1 / JCM 10045 / NBRC 100440) (Methanococcus jannaschii)).